The primary structure comprises 117 residues: Envelope glycoprotein J (117 aa).

The N-terminal stretch at 1–26 is a signal peptide; it reads MRSLLFVVGAWVAAAVTHLTPNAALA. Residues 26 to 64 are disordered; the sequence is ATGTTPTVGANSTADPGTGANGTTVPAAGTPANSTTAAE. Positions 27 to 40 are enriched in polar residues; that stretch reads TGTTPTVGANSTAD. At 27–73 the chain is on the extracellular side; the sequence is TGTTPTVGANSTADPGTGANGTTVPAAGTPANSTTAAETPAPFPPVD. N-linked (GlcNAc...) asparagine; by host glycosylation is found at N36, N46, and N58. Residues 74–94 form a helical membrane-spanning segment; the sequence is FALPVVIGGLCALTLAAMGAG. At 95-117 the chain is on the cytoplasmic side; sequence ALLHRCCRRAAARRRQRAAYVYA.

It belongs to the alphaherpesvirinae glycoprotein J family.

It localises to the host Golgi apparatus membrane. Its subcellular location is the host endoplasmic reticulum membrane. The protein localises to the host endosome membrane. Inhibits host cell apoptosis. Induces an increase in reactive oxygen species (ROS) in the host cell. The sequence is that of Envelope glycoprotein J (gJ) from Homo sapiens (Human).